A 1056-amino-acid polypeptide reads, in one-letter code: Contactin-5 (1056 aa).

Residues 1-14 are compositionally biased toward low complexity; sequence MKADSSSSSSMSSR. A disordered region spans residues 1 to 33; that stretch reads MKADSSSSSSMSSRMRLRNSHGVGSSSQDWSPF. Positions 22 to 31 are enriched in polar residues; the sequence is GVGSSSQDWS. 6 Ig-like C2-type domains span residues 57 to 142, 154 to 240, 258 to 343, 348 to 432, 438 to 519, and 527 to 622; these read PVFI…IVLS, PFSG…RVLS, PKIE…GHLQ, PQWI…AELK, PMFN…AELT, and PMRV…AELL. Intrachain disulfides connect Cys-81–Cys-131, Cys-175–Cys-227, and Cys-280–Cys-327. Asn-96 and Asn-119 each carry an N-linked (GlcNAc...) asparagine glycan. A glycan (N-linked (GlcNAc...) asparagine) is linked at Asn-355. 3 disulfides stabilise this stretch: Cys-369-Cys-416, Cys-459-Cys-507, and Cys-549-Cys-606. N-linked (GlcNAc...) asparagine glycans are attached at residues Asn-489 and Asn-496. Fibronectin type-III domains follow at residues 629–727, 732–829, 834–928, and 933–1023; these read PPGV…TKEA, APAN…SAEG, PPSE…TKKN, and PPGN…TSSG. A disordered region spans residues 711–736; that stretch reads GTGDPSPPSRAVRTKEAVPSVAPANV. Residues Asn-772, Asn-887, Asn-945, and Asn-958 are each glycosylated (N-linked (GlcNAc...) asparagine). Residue Asn-1035 is the site of GPI-anchor amidated asparagine attachment. A propeptide spans 1036–1056 (removed in mature form); that stretch reads SPPGLAWTALFLSLMVPSFPL.

Belongs to the immunoglobulin superfamily. Contactin family.

It localises to the cell membrane. In terms of biological role, contactins mediate cell surface interactions during nervous system development. This is Contactin-5 (cntn5) from Danio rerio (Zebrafish).